The primary structure comprises 878 residues: Pyruvate, phosphate dikinase (878 aa).

The tract at residues 1–347 (MKKLIYYFGS…LYILQTRTAK (347 aa)) is N-terminal. Arginine 96 provides a ligand contact to ATP. The linker 1 stretch occupies residues 348–404 (RTAIAAINIAVQMVEEKLISKEQALMRIDPESLNQLLHTRIDYSKGLTSIAEGLPAS). Residues 405 to 502 (PGAATGIAVF…VIKQGDIITI (98 aa)) form a central region. Threonine 457 bears the Phosphothreonine; by PDRP1 mark. Catalysis depends on histidine 459, which acts as the Tele-phosphohistidine intermediate. The tract at residues 503–537 (DGGSGKIFLGEMPLIQPTFSEESKLILDWADEISS) is linker 2. Positions 538–878 (LKVRANAETV…ASAQAKIKHG (341 aa)) are C-terminal. Arginine 565, arginine 621, glutamate 749, glycine 770, threonine 771, asparagine 772, and aspartate 773 together coordinate substrate. Glutamate 749 lines the Mg(2+) pocket. Aspartate 773 serves as a coordination point for Mg(2+). Residue cysteine 835 is the Proton donor of the active site.

This sequence belongs to the PEP-utilizing enzyme family. Homodimer. Requires Mg(2+) as cofactor. Phosphorylation of Thr-457 in the dark inactivates the enzyme. Dephosphorylation upon light stimulation reactivates the enzyme.

The enzyme catalyses pyruvate + phosphate + ATP = phosphoenolpyruvate + AMP + diphosphate + H(+). With respect to regulation, activated by light-induced dephosphorylation. Inhibited by dark-induced phosphorylation. Both reactions are catalyzed by PDRP1. In terms of biological role, catalyzes the reversible phosphorylation of pyruvate and phosphate. In Rickettsia felis (strain ATCC VR-1525 / URRWXCal2) (Rickettsia azadi), this protein is Pyruvate, phosphate dikinase (ppdK).